Here is a 508-residue protein sequence, read N- to C-terminus: Maturase K (508 aa).

Belongs to the intron maturase 2 family. MatK subfamily.

The protein resides in the plastid. Its subcellular location is the chloroplast. Its function is as follows. Usually encoded in the trnK tRNA gene intron. Probably assists in splicing its own and other chloroplast group II introns. This is Maturase K from Gordonia lasianthus (Loblolly bay).